The chain runs to 151 residues: Ribonuclease P protein component (151 aa).

The disordered stretch occupies residues M1 to L62. Over residues G28 to A48 the composition is skewed to low complexity.

The protein belongs to the RnpA family. In terms of assembly, consists of a catalytic RNA component (M1 or rnpB) and a protein subunit.

It catalyses the reaction Endonucleolytic cleavage of RNA, removing 5'-extranucleotides from tRNA precursor.. In terms of biological role, RNaseP catalyzes the removal of the 5'-leader sequence from pre-tRNA to produce the mature 5'-terminus. It can also cleave other RNA substrates such as 4.5S RNA. The protein component plays an auxiliary but essential role in vivo by binding to the 5'-leader sequence and broadening the substrate specificity of the ribozyme. The chain is Ribonuclease P protein component from Thermus oshimai.